The primary structure comprises 160 residues: Large ribosomal subunit protein eL21 (160 aa).

2 stretches are compositionally biased toward basic and acidic residues: residues 112–123 and 136–145; these read NDQKKKEAKEKG and REAHFVRTNG. The disordered stretch occupies residues 112–145; that stretch reads NDQKKKEAKEKGTWVQLKRQPAPPREAHFVRTNG.

This sequence belongs to the eukaryotic ribosomal protein eL21 family. In terms of assembly, component of the large ribosomal subunit.

Its subcellular location is the cytoplasm. It localises to the cytosol. It is found in the endoplasmic reticulum. Functionally, component of the large ribosomal subunit. The ribosome is a large ribonucleoprotein complex responsible for the synthesis of proteins in the cell. The sequence is that of Large ribosomal subunit protein eL21 from Mus musculus (Mouse).